Consider the following 175-residue polypeptide: Putative carbonic anhydrase-like protein YbcF (175 aa).

Belongs to the beta-class carbonic anhydrase family.

The sequence is that of Putative carbonic anhydrase-like protein YbcF (ybcF) from Bacillus subtilis (strain 168).